An 84-amino-acid chain; its full sequence is Small ribosomal subunit protein uS17 (84 aa).

Belongs to the universal ribosomal protein uS17 family. In terms of assembly, part of the 30S ribosomal subunit.

One of the primary rRNA binding proteins, it binds specifically to the 5'-end of 16S ribosomal RNA. This is Small ribosomal subunit protein uS17 from Caldanaerobacter subterraneus subsp. tengcongensis (strain DSM 15242 / JCM 11007 / NBRC 100824 / MB4) (Thermoanaerobacter tengcongensis).